We begin with the raw amino-acid sequence, 119 residues long: Endocuticle structural glycoprotein SgAbd-3 (119 aa).

Gln1 carries the pyrrolidone carboxylic acid modification. The 75-residue stretch at 24-98 (DGSYRYSFET…PQGAHLPTPP (75 aa)) folds into the Chitin-binding type R&amp;R domain. Residues 33–55 (TSDGQRASQEGALKQVSAPGPDG) are disordered. Thr96 is a glycosylation site (O-linked (HexNAc...) threonine).

In terms of biological role, component of the abdominal endocuticle. This Schistocerca gregaria (Desert locust) protein is Endocuticle structural glycoprotein SgAbd-3.